The chain runs to 75 residues: Alpha-elapitoxin-Bc2a (75 aa).

The first 2 residues, 1-2 (YT), serve as a signal peptide directing secretion. 5 disulfides stabilise this stretch: Cys-5-Cys-24, Cys-17-Cys-45, Cys-30-Cys-34, Cys-49-Cys-60, and Cys-61-Cys-66.

It belongs to the three-finger toxin family. Long-chain subfamily. Type II alpha-neurotoxin sub-subfamily. As to quaternary structure, monomer in solution, homodimer in crystal state. In terms of tissue distribution, expressed by the venom gland.

The protein resides in the secreted. Functionally, binds to muscular and neuronal nicotinic acetylcholine receptor (nAChR) and inhibits acetylcholine from binding to the receptor, thereby impairing neuromuscular and neuronal transmission. Reversibly blocks chick and mouse muscle nicotinic acetylcholine receptors. Blocks muscle type nAChR with an IC(50)=30 nM, when heterologously expressed in oocytes. Also binds with high affinity to alpha-7/CHRNA7 nAChRs. In addition, shows a weak inhibition of neuronal alpha-3-beta-2/CHRNA3-CHRNB2 nAChR (IC(50)=2.9 uM). Selectively binds to alpha-1-delta subunit interface of the mouse muscle nicotinic acetylcholine receptor, with a 10-fold higher affinity for the adult than for the fetal receptors. In vivo, when intraperitoneally injected into mice, causes flaccid paralysis and respiratory distress, followed by death within 2-4 hours. The sequence is that of Alpha-elapitoxin-Bc2a from Bungarus candidus (Malayan krait).